Consider the following 563-residue polypeptide: Pyruvate decarboxylase isozyme 3 (563 aa).

Position 2 is an N-acetylserine (serine 2). Pyruvate contacts are provided by aspartate 28 and histidine 115. A Glycyl lysine isopeptide (Lys-Gly) (interchain with G-Cter in ubiquitin) cross-link involves residue lysine 212. Serine 223 carries the phosphoserine modification. Lysine 233 participates in a covalent cross-link: Glycyl lysine isopeptide (Lys-Gly) (interchain with G-Cter in ubiquitin). Threonine 266 carries the post-translational modification Phosphothreonine. A Glycyl lysine isopeptide (Lys-Gly) (interchain with G-Cter in ubiquitin) cross-link involves residue lysine 269. A Phosphothreonine modification is found at threonine 353. Thiamine diphosphate is bound by residues threonine 390 and 413–415 (GSI). A Mg(2+)-binding site is contributed by aspartate 444. Residues 445-446 (GS) and 471-476 (NDGYTI) contribute to the thiamine diphosphate site. Positions 471 and 473 each coordinate Mg(2+). Pyruvate is bound at residue glutamate 477. Lysine 505 is covalently cross-linked (Glycyl lysine isopeptide (Lys-Gly) (interchain with G-Cter in ubiquitin)). Phosphothreonine is present on threonine 522.

The protein belongs to the TPP enzyme family. As to quaternary structure, homotetramer. Mg(2+) serves as cofactor. Requires thiamine diphosphate as cofactor.

It localises to the cytoplasm. It catalyses the reaction pyruvate + H(+) = acetaldehyde + CO2. The catalysed reaction is 3-methyl-2-oxobutanoate + H(+) = 2-methylpropanal + CO2. The enzyme catalyses (S)-3-methyl-2-oxopentanoate + H(+) = 2-methylbutanal + CO2. It carries out the reaction indole-3-pyruvate + H(+) = indole-3-acetaldehyde + CO2. It catalyses the reaction 3-phenylpyruvate + H(+) = 2-phenylacetaldehyde + CO2. The catalysed reaction is 2-oxobutanoate + H(+) = propanal + CO2. The enzyme catalyses 2-oxopentanoate + H(+) = butanal + CO2. It carries out the reaction 2 acetaldehyde = acetoin. It catalyses the reaction acetaldehyde + pyruvate + H(+) = acetoin + CO2. It participates in fermentation; ethanol fermentation. The protein operates within amino-acid degradation; Ehrlich pathway. Functionally, minor of three pyruvate decarboxylases (PDC1, PDC5, PDC6) implicated in the nonoxidative conversion of pyruvate to acetaldehyde and carbon dioxide during alcoholic fermentation. Most of the produced acetaldehyde is subsequently reduced to ethanol, but some is required for cytosolic acetyl-CoA production for biosynthetic pathways. The enzyme is also one of five 2-oxo acid decarboxylases (PDC1, PDC5, PDC6, ARO10, and THI3) able to decarboxylate more complex 2-oxo acids (alpha-keto-acids) than pyruvate, which seem mainly involved in amino acid catabolism. Here the enzyme catalyzes the decarboxylation of amino acids, which, in a first step, have been transaminated to the corresponding 2-oxo acids. In a third step, the resulting aldehydes are reduced to alcohols, collectively referred to as fusel oils or alcohols. Its preferred substrates are the transaminated amino acids derived from threonine (2-oxobutanoate), norvaline (2-oxopentanoate), valine (3-methyl-2-oxobutanoate, also alpha-keto-isovalerate), isoleucine ((3S)-3-methyl-2-oxopentanoate, also alpha-keto-beta-methylvalerate), phenylalanine (phenylpyruvate), and tryptophan (3-(indol-3-yl)pyruvate), whereas transaminated leucine is no substrate. In a side-reaction the carbanionic intermediate (or active aldehyde) generated by decarboxylation or by activation of an aldehyde can react with an aldehyde via condensation (or carboligation) yielding a 2-hydroxy ketone, collectively called acyloins. The expression level of this protein in the presence of fermentable carbon sources is so low that it cannot compensate for the other two pyruvate decarboxylases to sustain fermentation. The protein is Pyruvate decarboxylase isozyme 3 (PDC6) of Saccharomyces cerevisiae (strain ATCC 204508 / S288c) (Baker's yeast).